The sequence spans 106 residues: Large ribosomal subunit protein bL21 (106 aa).

This sequence belongs to the bacterial ribosomal protein bL21 family. As to quaternary structure, part of the 50S ribosomal subunit. Contacts protein L20.

In terms of biological role, this protein binds to 23S rRNA in the presence of protein L20. The chain is Large ribosomal subunit protein bL21 from Fervidobacterium nodosum (strain ATCC 35602 / DSM 5306 / Rt17-B1).